A 75-amino-acid chain; its full sequence is ATP synthase subunit 9, mitochondrial (75 aa).

Helical transmembrane passes span 10-30 and 55-75; these read LVLG…GILF and FALV…VYFI.

This sequence belongs to the ATPase C chain family. In terms of assembly, F-type ATPases have 2 components, CF(1) - the catalytic core - and CF(0) - the membrane proton channel. CF(1) has five subunits: alpha(3), beta(3), gamma(1), delta(1), epsilon(1). CF(0) has three main subunits: a, b and c.

It localises to the mitochondrion membrane. Functionally, mitochondrial membrane ATP synthase (F(1)F(0) ATP synthase or Complex V) produces ATP from ADP in the presence of a proton gradient across the membrane which is generated by electron transport complexes of the respiratory chain. F-type ATPases consist of two structural domains, F(1) - containing the extramembraneous catalytic core and F(0) - containing the membrane proton channel, linked together by a central stalk and a peripheral stalk. During catalysis, ATP synthesis in the catalytic domain of F(1) is coupled via a rotary mechanism of the central stalk subunits to proton translocation. Part of the complex F(0) domain. A homomeric c-ring of probably 10 subunits is part of the complex rotary element. The sequence is that of ATP synthase subunit 9, mitochondrial (ATP9) from Paramecium tetraurelia.